Reading from the N-terminus, the 340-residue chain is UDP-3-O-(3-hydroxymyristoyl)glucosamine N-acyltransferase (340 aa).

His-239 functions as the Proton acceptor in the catalytic mechanism.

This sequence belongs to the transferase hexapeptide repeat family. LpxD subfamily. Homotrimer.

The catalysed reaction is a UDP-3-O-[(3R)-3-hydroxyacyl]-alpha-D-glucosamine + a (3R)-hydroxyacyl-[ACP] = a UDP-2-N,3-O-bis[(3R)-3-hydroxyacyl]-alpha-D-glucosamine + holo-[ACP] + H(+). The enzyme catalyses UDP-3-O-[(3R)-3-hydroxytetradecanoyl]-alpha-D-glucosamine + (3R)-hydroxytetradecanoyl-[ACP] = UDP-2-N,3-O-bis[(3R)-3-hydroxytetradecanoyl]-alpha-D-glucosamine + holo-[ACP] + H(+). It participates in glycolipid biosynthesis; lipid IV(A) biosynthesis; lipid IV(A) from (3R)-3-hydroxytetradecanoyl-[acyl-carrier-protein] and UDP-N-acetyl-alpha-D-glucosamine: step 3/6. Catalyzes the N-acylation of UDP-3-O-(hydroxytetradecanoyl)glucosamine using 3-hydroxytetradecanoyl-ACP as the acyl donor. Is involved in the biosynthesis of lipid A, a phosphorylated glycolipid that anchors the lipopolysaccharide to the outer membrane of the cell. This chain is UDP-3-O-(3-hydroxymyristoyl)glucosamine N-acyltransferase, found in Yersinia pestis bv. Antiqua (strain Antiqua).